The primary structure comprises 498 residues: Protein flp (498 aa).

A run of 4 helical transmembrane segments spans residues 6 to 26 (LYFL…IYIT), 389 to 409 (FNIV…FSAY), 433 to 453 (LSLC…YLIL), and 471 to 491 (LALI…LLFL).

The protein localises to the cell membrane. Functionally, its precise function is unknown. Has no penicillin-binding activity and is not involved in methicillin resistance. This is Protein flp (flp) from Staphylococcus aureus (strain COL).